The sequence spans 309 residues: Malate dehydrogenase (309 aa).

NAD(+) contacts are provided by residues 8 to 13 (GAGLVG) and D33. Substrate is bound by residues R82 and R88. NAD(+) contacts are provided by residues N95 and 118 to 120 (VSN). Substrate-binding residues include N120 and R151. The Proton acceptor role is filled by H175.

Belongs to the LDH/MDH superfamily. MDH type 3 family.

It catalyses the reaction (S)-malate + NAD(+) = oxaloacetate + NADH + H(+). Its function is as follows. Catalyzes the reversible oxidation of malate to oxaloacetate. The sequence is that of Malate dehydrogenase from Pseudomonas putida (strain GB-1).